The sequence spans 404 residues: L-cysteine:1D-myo-inositol 2-amino-2-deoxy-alpha-D-glucopyranoside ligase 1 (404 aa).

C47 is a binding site for Zn(2+). L-cysteinyl-5'-AMP-binding positions include 47–50 (CGIT), T62, and 85–87 (NIT). A 'HIGH' region motif is present at residues 49 to 59 (ITPYDSTHLGH). The 'ERGGDP' region motif lies at 188-193 (ERGGDP). W228 provides a ligand contact to L-cysteinyl-5'-AMP. C232 lines the Zn(2+) pocket. Residue 250–252 (GSD) coordinates L-cysteinyl-5'-AMP. H257 provides a ligand contact to Zn(2+). Position 284 (I284) interacts with L-cysteinyl-5'-AMP. The 'KMSKS' region signature appears at 290-294 (KMSKS).

It belongs to the class-I aminoacyl-tRNA synthetase family. MshC subfamily. As to quaternary structure, monomer. Zn(2+) is required as a cofactor.

It carries out the reaction 1D-myo-inositol 2-amino-2-deoxy-alpha-D-glucopyranoside + L-cysteine + ATP = 1D-myo-inositol 2-(L-cysteinylamino)-2-deoxy-alpha-D-glucopyranoside + AMP + diphosphate + H(+). Its function is as follows. Catalyzes the ATP-dependent condensation of GlcN-Ins and L-cysteine to form L-Cys-GlcN-Ins. The protein is L-cysteine:1D-myo-inositol 2-amino-2-deoxy-alpha-D-glucopyranoside ligase 1 of Corynebacterium jeikeium (strain K411).